A 504-amino-acid polypeptide reads, in one-letter code: Arabinose import ATP-binding protein AraG (504 aa).

ABC transporter domains lie at 8 to 243 (LSFR…MVGR) and 256 to 499 (YGEE…MPKV). 40-47 (GENGAGKS) contributes to the ATP binding site.

The protein belongs to the ABC transporter superfamily. Arabinose importer (TC 3.A.1.2.2) family. As to quaternary structure, the complex is composed of two ATP-binding proteins (AraG), two transmembrane proteins (AraH) and a solute-binding protein (AraF).

The protein localises to the cell inner membrane. The enzyme catalyses L-arabinose(out) + ATP + H2O = L-arabinose(in) + ADP + phosphate + H(+). In terms of biological role, part of the ABC transporter complex AraFGH involved in arabinose import. Responsible for energy coupling to the transport system. The polypeptide is Arabinose import ATP-binding protein AraG (Shigella dysenteriae serotype 1 (strain Sd197)).